The sequence spans 301 residues: Dihydroorotate dehydrogenase B (NAD(+)), catalytic subunit (301 aa).

Residues Lys-44, 68–72 (NAMGL), and Asn-122 contribute to the substrate site. 44–45 (KS) lines the FMN pocket. Residue Asn-122 participates in FMN binding. The active-site Nucleophile is the Cys-125. Residues Lys-160 and Ile-186 each contribute to the FMN site. Residue 187-188 (NT) participates in substrate binding. Residues Gly-212, 238–239 (GG), and 260–261 (GS) contribute to the FMN site.

Belongs to the dihydroorotate dehydrogenase family. Type 1 subfamily. Heterotetramer of 2 PyrK and 2 PyrD type B subunits. FMN serves as cofactor.

Its subcellular location is the cytoplasm. It catalyses the reaction (S)-dihydroorotate + NAD(+) = orotate + NADH + H(+). The protein operates within pyrimidine metabolism; UMP biosynthesis via de novo pathway; orotate from (S)-dihydroorotate (NAD(+) route): step 1/1. Functionally, catalyzes the conversion of dihydroorotate to orotate with NAD(+) as electron acceptor. In Methanocella arvoryzae (strain DSM 22066 / NBRC 105507 / MRE50), this protein is Dihydroorotate dehydrogenase B (NAD(+)), catalytic subunit (pyrD).